A 508-amino-acid chain; its full sequence is Photosystem II CP47 reaction center protein (508 aa).

The next 6 helical transmembrane spans lie at 21-36, 101-115, 140-156, 203-218, 237-252, and 457-472; these read AVHI…WAGS, IVFS…IWHW, GIHL…FGAF, IAAG…FHLS, VLSS…AFIV, and TFAL…HGAR.

The protein belongs to the PsbB/PsbC family. PsbB subfamily. As to quaternary structure, PSII is composed of 1 copy each of membrane proteins PsbA, PsbB, PsbC, PsbD, PsbE, PsbF, PsbH, PsbI, PsbJ, PsbK, PsbL, PsbM, PsbT, PsbX, PsbY, PsbZ, Psb30/Ycf12, at least 3 peripheral proteins of the oxygen-evolving complex and a large number of cofactors. It forms dimeric complexes. The cofactor is Binds multiple chlorophylls. PSII binds additional chlorophylls, carotenoids and specific lipids..

The protein resides in the plastid. It is found in the chloroplast thylakoid membrane. One of the components of the core complex of photosystem II (PSII). It binds chlorophyll and helps catalyze the primary light-induced photochemical processes of PSII. PSII is a light-driven water:plastoquinone oxidoreductase, using light energy to abstract electrons from H(2)O, generating O(2) and a proton gradient subsequently used for ATP formation. In Gnetum parvifolium (Small-leaved jointfir), this protein is Photosystem II CP47 reaction center protein.